The primary structure comprises 466 residues: Cysteine--tRNA ligase (466 aa).

Cys-30 is a Zn(2+) binding site. The 'HIGH' region signature appears at 32–42 (PTVYNYIHIGN). Zn(2+) contacts are provided by Cys-210, His-235, and Glu-239. Residues 267–271 (KMSKS) carry the 'KMSKS' region motif. Position 270 (Lys-270) interacts with ATP. Phosphoserine is present on Ser-271.

This sequence belongs to the class-I aminoacyl-tRNA synthetase family. Monomer. The cofactor is Zn(2+).

The protein resides in the cytoplasm. The enzyme catalyses tRNA(Cys) + L-cysteine + ATP = L-cysteinyl-tRNA(Cys) + AMP + diphosphate. The polypeptide is Cysteine--tRNA ligase (Geobacillus sp. (strain WCH70)).